The sequence spans 489 residues: N-succinylglutamate 5-semialdehyde dehydrogenase (489 aa).

224–229 provides a ligand contact to NAD(+); that stretch reads GSAKVG. Catalysis depends on residues E247 and C281.

It belongs to the aldehyde dehydrogenase family. AstD subfamily.

It carries out the reaction N-succinyl-L-glutamate 5-semialdehyde + NAD(+) + H2O = N-succinyl-L-glutamate + NADH + 2 H(+). The protein operates within amino-acid degradation; L-arginine degradation via AST pathway; L-glutamate and succinate from L-arginine: step 4/5. In terms of biological role, catalyzes the NAD-dependent reduction of succinylglutamate semialdehyde into succinylglutamate. The sequence is that of N-succinylglutamate 5-semialdehyde dehydrogenase from Chromohalobacter salexigens (strain ATCC BAA-138 / DSM 3043 / CIP 106854 / NCIMB 13768 / 1H11).